The following is a 622-amino-acid chain: DNA-directed RNA polymerase subunit gamma (622 aa).

4 residues coordinate Zn(2+): C70, C72, C85, and C88. Mg(2+) is bound by residues D466, D468, and D470.

Belongs to the RNA polymerase beta' chain family. RpoC1 subfamily. As to quaternary structure, in cyanobacteria the RNAP catalytic core is composed of 2 alpha, 1 beta, 1 beta', 1 gamma and 1 omega subunit. When a sigma factor is associated with the core the holoenzyme is formed, which can initiate transcription. It depends on Mg(2+) as a cofactor. Zn(2+) serves as cofactor.

The enzyme catalyses RNA(n) + a ribonucleoside 5'-triphosphate = RNA(n+1) + diphosphate. In terms of biological role, DNA-dependent RNA polymerase catalyzes the transcription of DNA into RNA using the four ribonucleoside triphosphates as substrates. The polypeptide is DNA-directed RNA polymerase subunit gamma (Thermosynechococcus vestitus (strain NIES-2133 / IAM M-273 / BP-1)).